A 284-amino-acid chain; its full sequence is Ribosomal RNA small subunit methyltransferase A (284 aa).

S-adenosyl-L-methionine is bound by residues asparagine 12, leucine 14, glycine 38, glutamate 59, aspartate 81, and asparagine 106.

This sequence belongs to the class I-like SAM-binding methyltransferase superfamily. rRNA adenine N(6)-methyltransferase family. RsmA subfamily.

It localises to the cytoplasm. It carries out the reaction adenosine(1518)/adenosine(1519) in 16S rRNA + 4 S-adenosyl-L-methionine = N(6)-dimethyladenosine(1518)/N(6)-dimethyladenosine(1519) in 16S rRNA + 4 S-adenosyl-L-homocysteine + 4 H(+). In terms of biological role, specifically dimethylates two adjacent adenosines (A1518 and A1519) in the loop of a conserved hairpin near the 3'-end of 16S rRNA in the 30S particle. May play a critical role in biogenesis of 30S subunits. In Phytoplasma australiense, this protein is Ribosomal RNA small subunit methyltransferase A.